The sequence spans 172 residues: Large ribosomal subunit protein uL10 (172 aa).

This sequence belongs to the universal ribosomal protein uL10 family. Part of the ribosomal stalk of the 50S ribosomal subunit. The N-terminus interacts with L11 and the large rRNA to form the base of the stalk. The C-terminus forms an elongated spine to which L12 dimers bind in a sequential fashion forming a multimeric L10(L12)X complex.

Functionally, forms part of the ribosomal stalk, playing a central role in the interaction of the ribosome with GTP-bound translation factors. This is Large ribosomal subunit protein uL10 from Nitrobacter winogradskyi (strain ATCC 25391 / DSM 10237 / CIP 104748 / NCIMB 11846 / Nb-255).